We begin with the raw amino-acid sequence, 145 residues long: Ribosome maturation factor RimP (145 aa).

This sequence belongs to the RimP family.

The protein resides in the cytoplasm. Functionally, required for maturation of 30S ribosomal subunits. The protein is Ribosome maturation factor RimP of Azotobacter vinelandii (strain DJ / ATCC BAA-1303).